Reading from the N-terminus, the 394-residue chain is Flavohemoprotein (394 aa).

The 138-residue stretch at 1–138 folds into the Globin domain; that stretch reads MLTQEHINII…LAQVFIDREG (138 aa). A heme b-binding site is contributed by His85. Residues Tyr95 and Glu137 each act as charge relay system in the active site. Positions 149–394 are reductase; that stretch reads GGWRDGRTFV…VFGPHAQLAA (246 aa). The FAD-binding FR-type domain occupies 152-262; sequence RDGRTFVVRE…YAPAGDFFYV (111 aa). Residues Tyr190 and 206-209 contribute to the FAD site; that span reads RQYS. Residue 274 to 279 coordinates NADP(+); the sequence is GVGATP. 385–388 is a binding site for FAD; sequence VFGP.

Belongs to the globin family. Two-domain flavohemoproteins subfamily. The protein in the C-terminal section; belongs to the flavoprotein pyridine nucleotide cytochrome reductase family. The cofactor is heme b. Requires FAD as cofactor.

The enzyme catalyses 2 nitric oxide + NADPH + 2 O2 = 2 nitrate + NADP(+) + H(+). It carries out the reaction 2 nitric oxide + NADH + 2 O2 = 2 nitrate + NAD(+) + H(+). In terms of biological role, is involved in NO detoxification in an aerobic process, termed nitric oxide dioxygenase (NOD) reaction that utilizes O(2) and NAD(P)H to convert NO to nitrate, which protects the bacterium from various noxious nitrogen compounds. Therefore, plays a central role in the inducible response to nitrosative stress. The protein is Flavohemoprotein (hmp) of Vibrio cholerae serotype O1 (strain ATCC 39315 / El Tor Inaba N16961).